We begin with the raw amino-acid sequence, 331 residues long: NADH-quinone oxidoreductase subunit H (331 aa).

A run of 8 helical transmembrane segments spans residues 13–33 (FLISSATVIFLVLNIAAVLTL), 80–100 (WVFLAAPIAMFLPAAAVWLVI), 113–133 (IGLVYFFAITSIGALGVIMAG), 159–179 (LILSLLGVAMLTGSLSMVDIV), 183–203 (AGGFWNWIIWPQLPMFLAFFV), 249–269 (VMSAVASTLFLGGWQPPLPFL), 273–293 (VFNWLWLGIKTTLLIFVFQWI), and 311–331 (KILVPVTILWLFVTAGAMLVI).

This sequence belongs to the complex I subunit 1 family. NDH-1 is composed of 14 different subunits. Subunits NuoA, H, J, K, L, M, N constitute the membrane sector of the complex.

It localises to the cell membrane. The catalysed reaction is a quinone + NADH + 5 H(+)(in) = a quinol + NAD(+) + 4 H(+)(out). NDH-1 shuttles electrons from NADH, via FMN and iron-sulfur (Fe-S) centers, to quinones in the respiratory chain. The immediate electron acceptor for the enzyme in this species is believed to be ubiquinone. Couples the redox reaction to proton translocation (for every two electrons transferred, four hydrogen ions are translocated across the cytoplasmic membrane), and thus conserves the redox energy in a proton gradient. This subunit may bind ubiquinone. This is NADH-quinone oxidoreductase subunit H from Rubrobacter xylanophilus (strain DSM 9941 / JCM 11954 / NBRC 16129 / PRD-1).